Consider the following 563-residue polypeptide: MNTKELIASELSSIIDSLDQEAILKLLETPKNSEMGDIAFPAFSLAKVERKAPQMIAAELAEKMNSQAFEKVVATGPYVNFFLDKSAISAQVLQAVTTEKEHYADQNIGKQENVVIDMSSPNIAKPFSIGHLRSTVIGDSLSHIFQKIGYQTVKVNHLGDWGKQFGMLIVAYKKWGDEEAVKAHPIDELLKLYVRINAEAENDPSLDEEAREWFRKLENGDEEALALWQWFRDESLVEFNRLYNELKVEFDSYNGEAFYNDKMDAVVDILSEKGLLLESEGAQVVNLEKYGIEHPALIKKSDGATLYITRDLAAALYRKNEYQFAKSIYVVGQEQSAHFKQLKAVLQEMGYDWSDDITHVPFGLVTKEGKKLSTRKGNVILLEPTIAEAVSRAKVQIEAKNPELENKDQVAHAVGVGAIKFYDLKTDRTNGYDFDLEAMVSFEGETGPYVQYAYARIQSILRKADFKPETSGNYSLNDTESWEIIKLIQDFPRIINRAADNFEPSIIAKFAISLAQSFNKYYAHTRILDESPERDSRLALSYATAVVLKEALRLLGVEAPEKM.

A 'HIGH' region motif is present at residues 121–131; the sequence is PNIAKPFSIGH.

It belongs to the class-I aminoacyl-tRNA synthetase family. As to quaternary structure, monomer.

It localises to the cytoplasm. It catalyses the reaction tRNA(Arg) + L-arginine + ATP = L-arginyl-tRNA(Arg) + AMP + diphosphate. This Streptococcus pneumoniae (strain CGSP14) protein is Arginine--tRNA ligase.